The chain runs to 95 residues: Cell division protein FtsB (95 aa).

Residues 1-3 (MRW) are Cytoplasmic-facing. A helical transmembrane segment spans residues 4–21 (VLAGLTALLLWLQGLLWF). Residues 22-95 (GEGGLNDVRG…QIIEREDDAR (74 aa)) lie on the Periplasmic side of the membrane. The stretch at 26–76 (LNDVRGLSRSVEAQREEVDRLRQRNQALEAEVNDLKTGLEALEERARSELG) forms a coiled coil.

Belongs to the FtsB family. Part of a complex composed of FtsB, FtsL and FtsQ.

Its subcellular location is the cell inner membrane. Its function is as follows. Essential cell division protein. May link together the upstream cell division proteins, which are predominantly cytoplasmic, with the downstream cell division proteins, which are predominantly periplasmic. The polypeptide is Cell division protein FtsB (Alkalilimnicola ehrlichii (strain ATCC BAA-1101 / DSM 17681 / MLHE-1)).